The sequence spans 398 residues: tRNA-specific 2-thiouridylase MnmA (398 aa).

Residues 20–27 and leucine 46 contribute to the ATP site; that span reads AMSGGVDS. Cysteine 114 (nucleophile) is an active-site residue. A disulfide bridge links cysteine 114 with cysteine 210. Residue glycine 138 participates in ATP binding. The interaction with tRNA stretch occupies residues 160 to 162; sequence RDQ. Catalysis depends on cysteine 210, which acts as the Cysteine persulfide intermediate.

This sequence belongs to the MnmA/TRMU family.

The protein localises to the cytoplasm. The catalysed reaction is S-sulfanyl-L-cysteinyl-[protein] + uridine(34) in tRNA + AH2 + ATP = 2-thiouridine(34) in tRNA + L-cysteinyl-[protein] + A + AMP + diphosphate + H(+). Catalyzes the 2-thiolation of uridine at the wobble position (U34) of tRNA, leading to the formation of s(2)U34. The chain is tRNA-specific 2-thiouridylase MnmA from Brucella melitensis biotype 1 (strain ATCC 23456 / CCUG 17765 / NCTC 10094 / 16M).